The chain runs to 275 residues: Penicillin-insensitive murein endopeptidase (275 aa).

The N-terminal stretch at 1-19 is a signal peptide; sequence MKKWIAGLLALIAISPVMA. Disulfide bonds link Cys-44/Cys-264, Cys-187/Cys-235, and Cys-216/Cys-223. Residues His-110, His-113, Asp-120, Asp-147, and His-211 each coordinate Zn(2+). The tract at residues 234-262 is disordered; sequence GCGAELESWFQPHQPSAKPGKTLPPPLPP.

The protein belongs to the peptidase M74 family. Dimer. Zn(2+) serves as cofactor.

The protein resides in the periplasm. Its function is as follows. Murein endopeptidase that cleaves the D-alanyl-meso-2,6-diamino-pimelyl amide bond that connects peptidoglycan strands. Likely plays a role in the removal of murein from the sacculus. This chain is Penicillin-insensitive murein endopeptidase, found in Yersinia enterocolitica serotype O:8 / biotype 1B (strain NCTC 13174 / 8081).